The sequence spans 365 residues: 3-dehydroquinate synthase (365 aa).

NAD(+) is bound by residues 107–111 (GVIGD), 131–132 (TT), K144, and K153. The Zn(2+) site is built by E186, H251, and H268.

The protein belongs to the sugar phosphate cyclases superfamily. Dehydroquinate synthase family. The cofactor is Co(2+). Zn(2+) serves as cofactor. Requires NAD(+) as cofactor.

The protein localises to the cytoplasm. It catalyses the reaction 7-phospho-2-dehydro-3-deoxy-D-arabino-heptonate = 3-dehydroquinate + phosphate. It participates in metabolic intermediate biosynthesis; chorismate biosynthesis; chorismate from D-erythrose 4-phosphate and phosphoenolpyruvate: step 2/7. In terms of biological role, catalyzes the conversion of 3-deoxy-D-arabino-heptulosonate 7-phosphate (DAHP) to dehydroquinate (DHQ). The chain is 3-dehydroquinate synthase from Picosynechococcus sp. (strain ATCC 27264 / PCC 7002 / PR-6) (Agmenellum quadruplicatum).